We begin with the raw amino-acid sequence, 846 residues long: Translation initiation factor IF-2 (846 aa).

The interval 94–263 (QRSPEEIQAE…HGFQNPTGPV (170 aa)) is disordered. The segment covering 96–135 (SPEEIQAEQKRELDERRAAENAARDKVEAEVRQRNEEQAR) has biased composition (basic and acidic residues). Composition is skewed to low complexity over residues 136–148 (RQAA…APAP) and 158–176 (AAPV…ASED). Basic and acidic residues-rich tracts occupy residues 177 to 206 (AAAR…RGEA) and 230 to 239 (TTDEESDGAR). Residues 240–253 (RGRGGKSKLKKRNQ) are compositionally biased toward basic residues. Residues 346-513 (SRAPVVTVMG…AVLLQAEILE (168 aa)) enclose the tr-type G domain. The segment at 355–362 (GHVDHGKT) is G1. 355 to 362 (GHVDHGKT) is a binding site for GTP. Positions 380–384 (GITQH) are G2. A G3 region spans residues 401-404 (DTPG). GTP is bound by residues 401–405 (DTPGH) and 455–458 (NKID). A G4 region spans residues 455–458 (NKID). A G5 region spans residues 491-493 (SAK).

Belongs to the TRAFAC class translation factor GTPase superfamily. Classic translation factor GTPase family. IF-2 subfamily.

Its subcellular location is the cytoplasm. Its function is as follows. One of the essential components for the initiation of protein synthesis. Protects formylmethionyl-tRNA from spontaneous hydrolysis and promotes its binding to the 30S ribosomal subunits. Also involved in the hydrolysis of GTP during the formation of the 70S ribosomal complex. This chain is Translation initiation factor IF-2, found in Pseudomonas putida (strain ATCC 47054 / DSM 6125 / CFBP 8728 / NCIMB 11950 / KT2440).